The chain runs to 88 residues: HssA/B-like protein 12 (88 aa).

This sequence belongs to the hssA/B family.

The polypeptide is HssA/B-like protein 12 (hssl12) (Dictyostelium discoideum (Social amoeba)).